The primary structure comprises 282 residues: MLVCNTISEIRAFVREARSKGRSIGFVPTMGYLHEGHLELMRRAKERCDTVVISIFVNPTQFGPNEDYDRYPRDLERDARLAGQVGVDAIFNPSVEEMYPAGYCTYVDVERLTGKLCGLSRPGHFRGVCTVVTKLFNIVKPDYAFFGQKDAQQALVIKRMAADLNMDLEVITVPTVREADGLAMSSRNVYLDPEQRRAALVLSRSLEKAGEAFRAGERDASKLRQMVLDMIKAEPLANIDYVEIYSYPELEPLDQINGPALLALAVKIGQTRLIDNAILGQL.

30 to 37 (MGYLHEGH) contacts ATP. His37 functions as the Proton donor in the catalytic mechanism. Gln61 lines the (R)-pantoate pocket. Gln61 provides a ligand contact to beta-alanine. 147 to 150 (GQKD) contributes to the ATP binding site. Residue Gln153 coordinates (R)-pantoate. Residues Val176 and 184 to 187 (MSSR) each bind ATP.

This sequence belongs to the pantothenate synthetase family. Homodimer.

Its subcellular location is the cytoplasm. The enzyme catalyses (R)-pantoate + beta-alanine + ATP = (R)-pantothenate + AMP + diphosphate + H(+). The protein operates within cofactor biosynthesis; (R)-pantothenate biosynthesis; (R)-pantothenate from (R)-pantoate and beta-alanine: step 1/1. In terms of biological role, catalyzes the condensation of pantoate with beta-alanine in an ATP-dependent reaction via a pantoyl-adenylate intermediate. The polypeptide is Pantothenate synthetase (Pelotomaculum thermopropionicum (strain DSM 13744 / JCM 10971 / SI)).